A 270-amino-acid chain; its full sequence is Hemin import ATP-binding protein HmuV (270 aa).

Residues 2-238 (LTVENIEVTL…VTLSQAYGCT (237 aa)) form the ABC transporter domain. 34–41 (GHNGSGKT) is a binding site for ATP.

Belongs to the ABC transporter superfamily. Heme (hemin) importer (TC 3.A.1.14.5) family. In terms of assembly, the complex is composed of two ATP-binding proteins (HmuV), two transmembrane proteins (HmuU) and a solute-binding protein (HmuT).

The protein localises to the cell inner membrane. In terms of biological role, part of the ABC transporter complex HmuTUV involved in hemin import. Responsible for energy coupling to the transport system. This chain is Hemin import ATP-binding protein HmuV, found in Jannaschia sp. (strain CCS1).